Here is a 983-residue protein sequence, read N- to C-terminus: Receptor-like protein 19 (983 aa).

A signal peptide spans Met1–Ser25. Residues Thr26–Trp937 lie on the Extracellular side of the membrane. Residues Asn66 and Asn102 are each glycosylated (N-linked (GlcNAc...) asparagine). 31 LRR repeats span residues Phe82 to Leu108, Leu111 to Leu135, Ser136 to Leu159, His161 to Leu183, Ser184 to Leu207, Tyr209 to Leu231, Phe232 to Leu255, Ser256 to Cys281, Thr283 to Asn302, Leu303 to Leu327, Arg328 to Leu351, Asn353 to Ile375, Pro376 to Ser399, Ser401 to Leu424, Val425 to His448, Lys450 to Ser474, Phe475 to Asn498, Leu501 to Gln524, Glu525 to Leu548, Val550 to Gly571, Pro578 to Leu602, Pro603 to Ser628, Pro629 to Ser652, Ile654 to Ile674, Ser675 to Glu700, Gln702 to Phe720, Ser721 to Asn744, Leu793 to Leu817, Lys818 to Asn840, Leu841 to Leu865, and Tyr867 to Thr890. 6 N-linked (GlcNAc...) asparagine glycosylation sites follow: Asn137, Asn158, Asn171, Asn190, Asn195, and Asn206. Asn254 and Asn278 each carry an N-linked (GlcNAc...) asparagine glycan. The N-linked (GlcNAc...) asparagine glycan is linked to Asn347. N-linked (GlcNAc...) asparagine glycosylation is found at Asn389, Asn396, and Asn402. Residues Asn456, Asn461, Asn492, and Asn498 are each glycosylated (N-linked (GlcNAc...) asparagine). N-linked (GlcNAc...) asparagine glycosylation is found at Asn555, Asn558, Asn590, and Asn616. Asn734 and Asn744 each carry an N-linked (GlcNAc...) asparagine glycan. Residue Asn824 is glycosylated (N-linked (GlcNAc...) asparagine). Asn872 carries N-linked (GlcNAc...) asparagine glycosylation. Residues Ile938 to Leu958 form a helical membrane-spanning segment. Residues Phe959–His983 are Cytoplasmic-facing.

It belongs to the RLP family.

Its subcellular location is the cell membrane. In Arabidopsis thaliana (Mouse-ear cress), this protein is Receptor-like protein 19.